The sequence spans 240 residues: Myogenic factor 6 (240 aa).

The region spanning 91 to 142 is the bHLH domain; the sequence is DRRKAATLRERRRLKKINEAFEALKRRTVANPNQRLPKVEILRSAINYIERL.

In terms of assembly, efficient DNA binding requires dimerization with another bHLH protein. In terms of tissue distribution, skeletal muscle.

It localises to the nucleus. Involved in muscle differentiation (myogenic factor). Induces fibroblasts to differentiate into myoblasts. Probable sequence specific DNA-binding protein. The protein is Myogenic factor 6 (myf6) of Xenopus laevis (African clawed frog).